The following is a 192-amino-acid chain: Ion-translocating oxidoreductase complex subunit A (192 aa).

6 consecutive transmembrane segments (helical) span residues 5 to 25, 39 to 59, 65 to 85, 102 to 122, 134 to 154, and 171 to 191; these read ALIL…FLGL, TGMG…SYLV, APLG…AAVV, VLGI…VALL, ALYG…FASI, and AIAL…IGLV.

This sequence belongs to the NqrDE/RnfAE family. The complex is composed of six subunits: RnfA, RnfB, RnfC, RnfD, RnfE and RnfG.

The protein localises to the cell inner membrane. Part of a membrane-bound complex that couples electron transfer with translocation of ions across the membrane. This chain is Ion-translocating oxidoreductase complex subunit A, found in Thioalkalivibrio sulfidiphilus (strain HL-EbGR7).